The primary structure comprises 101 residues: Small ribosomal subunit protein uS14 (101 aa).

Residues 1-10 are compositionally biased toward basic and acidic residues; the sequence is MAKNSMVERD. The interval 1–20 is disordered; sequence MAKNSMVERDRKRRKLAQKY.

This sequence belongs to the universal ribosomal protein uS14 family. In terms of assembly, part of the 30S ribosomal subunit. Contacts proteins S3 and S10.

Functionally, binds 16S rRNA, required for the assembly of 30S particles and may also be responsible for determining the conformation of the 16S rRNA at the A site. This Halorhodospira halophila (strain DSM 244 / SL1) (Ectothiorhodospira halophila (strain DSM 244 / SL1)) protein is Small ribosomal subunit protein uS14.